A 906-amino-acid polypeptide reads, in one-letter code: MESAIAEGGASRFSASSGGGGSRGAPQHYPKTAGNSEFLGKTPGQNAQKWIPARSTRRDDNSAANNSANEKERHDAIFRKVRGILNKLTPEKFDKLCLELLNVGVESKLILKGVILLIVDKALEEPKYSSLYAQLCLRLAEDAPNFDGPAAEGQPGQKQSTTFRRLLISKLQDEFENRTRNVDVYDKRENPLLPEEEEQRAIAKIKMLGNIKFIGELGKLDLIHESILHKCIKTLLEKKKRVQLKDMGEDLECLCQIMRTVGPRLDHERAKSLMDQYFARMCSLMLSKELPARIRFLLQDTVELREHHWVPRKAFLDNGPKTINQIRQDAVKDLGVFIPAPMAQGRSDFFLEGPFMPPRMKMDRDPLGGLADMFGQMPGSGIGTGPGVIQDRFSPTMGRHRSNQLFNGHGGHIMPPTQSQFGEMGGKFMKSQGLSQLYHNQSQGLLSQLQGQSKDMPPRFSKKGQLNADEISLRPAQSFLMNKNQVPKLQPQITMIPPSAQPPRTQTPPLGQTPQLGLKTNPPLIQEKPAKTSKKPPPSKEELLKLTEAVVTDYLNSGNANDAVSGVREMRAPKHFLPEMLSKVIILSLDRSDEDKEKASSLISLLKQEGIATSDNFMQAFLNVLEQCPKLEVDIPLVKSYLAQFAARAIISELVSISELAQPLESGTHFPLFLLCLQQLAKLQDREWLTELFQQSKVNMQKMLPEIDQNKDRMLEILEGKGLSFLFPLLKLEKELLKQIKLDPSPQTIYKWIKDNISPKLHVDKGFVNILMTSFLQYISSEVSPPSDETDSSSAPSKEQLEQEKQLLLSFKPVMQKFLHDHVDLQVSALYALQVHCYNSSFPKGMLLRFFVHFYDMEIIEEEAFLAWKEDITQEFPGKGKALFQVNQWLTWLETAEEEESEEEAD.

At Met-1 the chain carries N-acetylmethionine. A disordered region spans residues 1–71; sequence MESAIAEGGA…SAANNSANEK (71 aa). The residue at position 11 (Ser-11) is a Phosphoserine. The region spanning 78 to 308 is the MIF4G domain; that stretch reads FRKVRGILNK…QDTVELREHH (231 aa). Thr-89 is modified (phosphothreonine). Residue Arg-359 is modified to Omega-N-methylarginine. Ser-394 carries the phosphoserine modification. N6-methyllysine is present on Lys-430. Phosphoserine is present on Ser-442. The interval 497-540 is disordered; the sequence is PPSAQPPRTQTPPLGQTPQLGLKTNPPLIQEKPAKTSKKPPPSK. Positions 502–515 are enriched in polar residues; the sequence is PPRTQTPPLGQTPQ. Residue Arg-504 is modified to Omega-N-methylarginine. Thr-507 and Thr-513 each carry phosphothreonine. The region spanning 542-665 is the MI domain; it reads ELLKLTEAVV…SISELAQPLE (124 aa). Lys-574 is covalently cross-linked (Glycyl lysine isopeptide (Lys-Gly) (interchain with G-Cter in SUMO2)). One can recognise a W2 domain in the interval 719 to 903; sequence EGKGLSFLFP…ETAEEEESEE (185 aa). Residue Ser-901 is modified to Phosphoserine.

This sequence belongs to the eukaryotic initiation factor 4G family. In terms of assembly, interacts with the serine/threonine protein kinases MKNK1 and MKNK2. Binds EIF4A and EIF3. Interacts with MIF4GD. Interacts with DAZAP2. Post-translationally, phosphorylation; hyperphosphorylated during mitosis. Ubiquitously expressed in all tissues examined.

Appears to play a role in the switch from cap-dependent to IRES-mediated translation during mitosis, apoptosis and viral infection. Cleaved by some caspases and viral proteases. This chain is Eukaryotic translation initiation factor 4 gamma 2, found in Mus musculus (Mouse).